We begin with the raw amino-acid sequence, 189 residues long: Leucine repeat adapter protein 25 (189 aa).

Position 28 is a phosphoserine (Ser-28). The tract at residues 54–83 is disordered; it reads ELSRAARAPDGPRHAAGAANAGPAAGPRRP. Over residues 67–83 the composition is skewed to low complexity; the sequence is HAAGAANAGPAAGPRRP. The LRR repeat unit spans residues 86-114; that stretch reads LDSALAALRKEMVGLRQLDMSLLCQLWGL. Positions 141–175 are disordered; the sequence is DSSYPPDAGLSDDEEPPDASLPPDPPPLTVPQTHN. Pro residues predominate over residues 159–169; sequence ASLPPDPPPLT. Phosphoserine is present on Ser-188.

The protein belongs to the FAM89 family. In terms of assembly, interacts with SKI. Interacts (via LRR repeat) with CDC42BPA (via AGC-kinase C-terminal domain), CDC42BPB (via AGC-kinase C-terminal domain) and LIMK1 (via LIM zinc-binding domains). Forms a tripartite complex with CDC42BPA, CDC42BPB and LIMK1.

The protein resides in the cytoplasm. The protein localises to the cell projection. Its subcellular location is the lamellipodium. Its function is as follows. Negatively regulates TGF-beta-induced signaling; in cooperation with SKI prevents the translocation of SMAD2 from the nucleus to the cytoplasm in response to TGF-beta. Acts as an adapter that mediates the specific recognition of LIMK1 by CDC42BPA and CDC42BPB in the lamellipodia. LRAP25-mediated CDC42BPA/CDC42BPB targeting to LIMK1 and the lamellipodium results in LIMK1 activation and the subsequent phosphorylation of CFL1 which is important for lamellipodial F-actin regulation. The chain is Leucine repeat adapter protein 25 (FAM89B) from Homo sapiens (Human).